The chain runs to 465 residues: Ribulose bisphosphate carboxylase large chain (465 aa).

Position 4 is an N6,N6,N6-trimethyllysine (Lys4). Asn113 and Thr163 together coordinate substrate. Catalysis depends on Lys165, which acts as the Proton acceptor. Position 167 (Lys167) interacts with substrate. Residues Lys191, Asp193, and Glu194 each coordinate Mg(2+). At Lys191 the chain carries N6-carboxylysine. Catalysis depends on His284, which acts as the Proton acceptor. Substrate-binding residues include Arg285, His317, and Ser369.

The protein belongs to the RuBisCO large chain family. Type I subfamily. Heterohexadecamer of 8 large chains and 8 small chains; disulfide-linked. The disulfide link is formed within the large subunit homodimers. The cofactor is Mg(2+). The disulfide bond which can form in the large chain dimeric partners within the hexadecamer appears to be associated with oxidative stress and protein turnover.

It localises to the plastid. Its subcellular location is the chloroplast. It carries out the reaction 2 (2R)-3-phosphoglycerate + 2 H(+) = D-ribulose 1,5-bisphosphate + CO2 + H2O. The catalysed reaction is D-ribulose 1,5-bisphosphate + O2 = 2-phosphoglycolate + (2R)-3-phosphoglycerate + 2 H(+). Its function is as follows. RuBisCO catalyzes two reactions: the carboxylation of D-ribulose 1,5-bisphosphate, the primary event in carbon dioxide fixation, as well as the oxidative fragmentation of the pentose substrate in the photorespiration process. Both reactions occur simultaneously and in competition at the same active site. The protein is Ribulose bisphosphate carboxylase large chain of Byrsonima crassifolia (Cajuil cimarron).